A 496-amino-acid chain; its full sequence is MLVVLLVALLVTRLVASLFRLALKELRHPLQGVVPSVSRVPLLGAAWQMRSFQPDNLHDKFAEYVKRFGRSFMGTVLGHVVMVTAEPRHIDALLQGQHQLKKGTMYFALRGWLGDGLLLSRGKEWHTMRKIITPTFHFSILEQFVEVFDRQSSILVERLRTLSYGNEVVNIYPLVGLAALDIITETAMGVNVDAQGADSEVVHAVKDLTNILATRFMRPHLLFPHLFRLCWPSGFRKQQAGVICLHEFTNGIIEQRRRLLAREANQDKPTKPHALLDTLLRATVDGQPLTDKQIRDEVNTFIFEGHDTTTSAVSFCLYLLSRHEAVQQKLFEELRMHYGQDLFRGVILSDFATLPYLSCVVKESLRLYPPIPAVARCLEKDLVIDEGYIPVGTNVVVLLWQLLRDEAIFTDPLVFQPERHLGEEAPRLSPYSYIPFSAGPRNCIGQKFALLEMKTMVTKVIRHYQLLPMGADVEPSIKIVLRSKSGVNVGLRPRLY.

Cysteine 443 contributes to the heme binding site.

Belongs to the cytochrome P450 family. The cofactor is heme.

It localises to the endoplasmic reticulum membrane. The protein localises to the microsome membrane. Functionally, may be involved in the metabolism of insect hormones and in the breakdown of synthetic insecticides. The sequence is that of Cytochrome P450 4ae1 (Cyp4ae1) from Drosophila melanogaster (Fruit fly).